The primary structure comprises 401 residues: Protein zntC (401 aa).

Transmembrane regions (helical) follow at residues 33–53 (GGLI…PWFL), 61–81 (LVSV…GAGF), and 114–134 (ITIV…SGGL). The tract at residues 141 to 247 (NHMDLSQHNH…SHKDEKDSEK (107 aa)) is disordered. Residues 167-184 (GDDDDDDVNEDQEEDSTK) show a composition bias toward acidic residues. The segment covering 200–209 (HNSSNSSSNG) has biased composition (low complexity). The span at 212 to 225 (HGLKKKKKSKKEHG) shows a compositional bias: basic residues. The segment covering 226-247 (HGHNHDHSSNGHSHKDEKDSEK) has biased composition (basic and acidic residues). A run of 5 helical transmembrane segments spans residues 256 to 276 (AWVF…GLGS), 285 to 305 (GLLI…GIAI), 316 to 336 (CIAL…GMAI), 351 to 371 (GIIL…ELLP), and 381 to 401 (KLKL…ALWV).

The protein belongs to the ZIP transporter (TC 2.A.5) family.

The protein resides in the membrane. Functionally, may transport divalent cations. May participate, with dstA, in the regulation of the differentiation of stalk cells during development. The polypeptide is Protein zntC (zntC) (Dictyostelium discoideum (Social amoeba)).